The following is a 377-amino-acid chain: Alanine racemase (377 aa).

K37 serves as the catalytic Proton acceptor; specific for D-alanine. K37 is modified (N6-(pyridoxal phosphate)lysine). A substrate-binding site is contributed by R135. Y271 (proton acceptor; specific for L-alanine) is an active-site residue. M319 contributes to the substrate binding site.

It belongs to the alanine racemase family. Requires pyridoxal 5'-phosphate as cofactor.

The catalysed reaction is L-alanine = D-alanine. Its pathway is amino-acid biosynthesis; D-alanine biosynthesis; D-alanine from L-alanine: step 1/1. Catalyzes the interconversion of L-alanine and D-alanine. May also act on other amino acids. This is Alanine racemase (alr) from Helicobacter pylori (strain P12).